The primary structure comprises 955 residues: Valine--tRNA ligase (955 aa).

The 'HIGH' region signature appears at 41-51 (PNITGSLHMGH). Residues 554 to 558 (KMSKS) carry the 'KMSKS' region motif. Residue Lys557 participates in ATP binding. Residues 926 to 946 (QEKNKLLKLNEINLKLSEQIK) adopt a coiled-coil conformation.

It belongs to the class-I aminoacyl-tRNA synthetase family. ValS type 1 subfamily. As to quaternary structure, monomer.

The protein resides in the cytoplasm. The catalysed reaction is tRNA(Val) + L-valine + ATP = L-valyl-tRNA(Val) + AMP + diphosphate. In terms of biological role, catalyzes the attachment of valine to tRNA(Val). As ValRS can inadvertently accommodate and process structurally similar amino acids such as threonine, to avoid such errors, it has a 'posttransfer' editing activity that hydrolyzes mischarged Thr-tRNA(Val) in a tRNA-dependent manner. This is Valine--tRNA ligase from Buchnera aphidicola subsp. Acyrthosiphon pisum (strain APS) (Acyrthosiphon pisum symbiotic bacterium).